The following is a 208-amino-acid chain: MSSSRIEELPDDDVPKTTVEDAADSSESEVEGAEEPTIPGGAAVTVHSRNEKKARKAIGKLGLKHVPGITRVTLRRPKGILFVINQPDVYRSPSSNTWIIFGEAKIEDLNSQAQASAAQQLAAAEAAGSNEHAGHDHASHDHGKGKAVESADKKDEEEDDEEVFDASGLEAKDIELVMAQASVSRNKAIKALKENDNDIVNSIMALSV.

Positions 1 to 19 (MSSSRIEELPDDDVPKTTV) are enriched in basic and acidic residues. Disordered regions lie at residues 1 to 50 (MSSS…HSRN) and 120 to 166 (QLAA…VFDA). Positions 21-34 (DAADSSESEVEGAE) are enriched in acidic residues. Residues 48-113 (SRNEKKARKA…AKIEDLNSQA (66 aa)) form the NAC-A/B domain. Low complexity predominate over residues 120–131 (QLAAAEAAGSNE). Residues 132–154 (HAGHDHASHDHGKGKAVESADKK) show a composition bias toward basic and acidic residues. Over residues 155 to 164 (DEEEDDEEVF) the composition is skewed to acidic residues. A UBA domain is found at 169-208 (LEAKDIELVMAQASVSRNKAIKALKENDNDIVNSIMALSV).

This sequence belongs to the NAC-alpha family. In terms of assembly, part of the nascent polypeptide-associated complex (NAC), consisting of EGD2 and EGD1. NAC associates with ribosomes via EGD1.

The protein resides in the cytoplasm. It is found in the nucleus. In terms of biological role, component of the nascent polypeptide-associated complex (NAC), a dynamic component of the ribosomal exit tunnel, protecting the emerging polypeptides from interaction with other cytoplasmic proteins to ensure appropriate nascent protein targeting. The NAC complex also promotes mitochondrial protein import by enhancing productive ribosome interactions with the outer mitochondrial membrane and blocks the inappropriate interaction of ribosomes translating non-secretory nascent polypeptides with translocation sites in the membrane of the endoplasmic reticulum. EGD2 may also be involved in transcription regulation. This Ajellomyces capsulatus (strain NAm1 / WU24) (Darling's disease fungus) protein is Nascent polypeptide-associated complex subunit alpha (EGD2).